A 235-amino-acid chain; its full sequence is MRTQVYEGLCKNYFSLAVLQRDRIKLLFFDILVFLSVFLLFLLFLVDIMANNTTSLGSPWPENFWEDLIMSFTVSMAIGLVLGGFIWAVFICLSRRRRASAPISQWSSSRRSRSSYTHGLNRTGFYRHSGCERRSNLSLASLTFQRQASLEQANSFPRKSSFRASTFHPFLQCPPLPVETESQLVTLPSSNISPTISTSHSLSRPDYWSSNSLRVGLSTPPPPAYESIIKAFPDS.

The short motif at 95–113 is the Bipartite nuclear localization signal element; that stretch reads RRRRASAPISQWSSSRRSR. Phosphoserine occurs at positions 135, 138, 141, and 149.

It belongs to the MYCT1 family. In terms of tissue distribution, down-regulated in gastric cancer tissues.

Its subcellular location is the nucleus. In terms of biological role, may regulate certain MYC target genes, MYC seems to be a direct upstream transcriptional activator. Does not seem to significantly affect growth cell capacity. Overexpression seems to mediate many of the known phenotypic features associated with MYC, including promotion of apoptosis, alteration of morphology, enhancement of anchorage-independent growth, tumorigenic conversion, promotion of genomic instability, and inhibition of hematopoietic differentiation. The sequence is that of Myc target protein 1 (MYCT1) from Homo sapiens (Human).